We begin with the raw amino-acid sequence, 1071 residues long: ATP-dependent helicase/deoxyribonuclease subunit B (1071 aa).

Belongs to the helicase family. AddB/RexB type 2 subfamily. Heterodimer of AddA and RexB. It depends on Mg(2+) as a cofactor.

Functionally, the heterodimer acts as both an ATP-dependent DNA helicase and an ATP-dependent, dual-direction single-stranded exonuclease. Recognizes the chi site generating a DNA molecule suitable for the initiation of homologous recombination. This subunit has 5' -&gt; 3' nuclease activity but not helicase activity. This Streptococcus pyogenes serotype M3 (strain ATCC BAA-595 / MGAS315) protein is ATP-dependent helicase/deoxyribonuclease subunit B.